The primary structure comprises 317 residues: MVWQGPQRRLLGSLNGTSPATPHFELAANQTGPRCLEVSIPNGLFLSLGLVSVVENVLVVAAIAKNRNLHSPMYYFIGCLAVSDLLVSVTNVLETAVMLLVEAGALAAQAAVVQQLDDIIDVLICGSMVSSLCFLGAIAVDRYLSIFYALRYHSIVTLPRAWRAISAIWVASVLSSTLFIAYYNHTAVLLCLVSFFVAMLVLMAVLYVHMLARARQHARGIARLRKRQHSVHQGFGLKGAATLTILLGIFFLCWGPFFLHLSLMVLCPQHPICGCVFQNFNLFLTLIICNSIIDPFIYAFRSQELRKTLQEVVLCSW.

Topologically, residues 1–37 (MVWQGPQRRLLGSLNGTSPATPHFELAANQTGPRCLE) are extracellular. N15 and N29 each carry an N-linked (GlcNAc...) asparagine glycan. A helical membrane pass occupies residues 38–63 (VSIPNGLFLSLGLVSVVENVLVVAAI). At 64 to 72 (AKNRNLHSP) the chain is on the cytoplasmic side. A helical transmembrane segment spans residues 73-93 (MYYFIGCLAVSDLLVSVTNVL). At 94–118 (ETAVMLLVEAGALAAQAAVVQQLDD) the chain is on the extracellular side. Residues 119-140 (IIDVLICGSMVSSLCFLGAIAV) traverse the membrane as a helical segment. Residues 141–163 (DRYLSIFYALRYHSIVTLPRAWR) lie on the Cytoplasmic side of the membrane. Residues 164-183 (AISAIWVASVLSSTLFIAYY) form a helical membrane-spanning segment. The Extracellular portion of the chain corresponds to 184-191 (NHTAVLLC). The helical transmembrane segment at 192–211 (LVSFFVAMLVLMAVLYVHML) threads the bilayer. At 212–240 (ARARQHARGIARLRKRQHSVHQGFGLKGA) the chain is on the cytoplasmic side. Residues 241 to 266 (ATLTILLGIFFLCWGPFFLHLSLMVL) traverse the membrane as a helical segment. Residues 267–279 (CPQHPICGCVFQN) are Extracellular-facing. The helical transmembrane segment at 280–300 (FNLFLTLIICNSIIDPFIYAF) threads the bilayer. Over 301–317 (RSQELRKTLQEVVLCSW) the chain is Cytoplasmic. C315 carries the S-palmitoyl cysteine lipid modification.

Belongs to the G-protein coupled receptor 1 family. As to quaternary structure, interacts with MGRN1, but does not undergo MGRN1-mediated ubiquitination; this interaction competes with GNAS-binding and thus inhibits agonist-induced cAMP production. Interacts with OPN3; the interaction results in a decrease in MC1R-mediated cAMP signaling and ultimately a decrease in melanin production in melanocytes.

It localises to the cell membrane. Functionally, receptor for MSH (alpha, beta and gamma) and ACTH. The activity of this receptor is mediated by G proteins which activate adenylate cyclase. Mediates melanogenesis, the production of eumelanin (black/brown) and phaeomelanin (red/yellow), via regulation of cAMP signaling in melanocytes. This is Melanocyte-stimulating hormone receptor (MC1R) from Canis lupus familiaris (Dog).